A 166-amino-acid polypeptide reads, in one-letter code: uncharacterized protein (166 aa).

Residues 25-116 form a disordered region; it reads PEEPPLWVPP…QGADEVHSQH (92 aa). The residue at position 105 (serine 105) is a Phosphoserine.

This is an uncharacterized protein from Rattus norvegicus (Rat).